Consider the following 243-residue polypeptide: uncharacterized protein (243 aa).

The helical transmembrane segment at 55-75 threads the bilayer; that stretch reads IILIILLTIFMVISTLVIAFV.

The protein localises to the membrane. This is an uncharacterized protein from Rickettsia prowazekii (strain Madrid E).